We begin with the raw amino-acid sequence, 162 residues long: Interleukin-15 (162 aa).

Positions 1 to 29 are cleaved as a signal peptide; the sequence is MRILKPYLRSTSIQCYLCLLLNSHFLTEA. Residues 30–48 constitute a propeptide that is removed on maturation; the sequence is CIPVFILSCINAGLPKTEA. Cystine bridges form between Cys-83–Cys-133 and Cys-90–Cys-136. Residues Asn-104 and Asn-127 are each glycosylated (N-linked (GlcNAc...) asparagine).

It belongs to the IL-15/IL-21 family.

It localises to the secreted. Its function is as follows. Cytokine that plays a major role in the development of inflammatory and protective immune responses to microbial invaders and parasites by modulating immune cells of both the innate and adaptive immune systems. Stimulates the proliferation of natural killer cells, T-cells and B-cells and promotes the secretion of several cytokines. In monocytes, induces the production of IL8 and monocyte chemotactic protein 1/CCL2, two chemokines that attract neutrophils and monocytes respectively to sites of infection. Unlike most cytokines, which are secreted in soluble form, IL15 is expressed in association with its high affinity IL15RA on the surface of IL15-producing cells and delivers signals to target cells that express IL2RB and IL2RG receptor subunits. Binding to its receptor triggers the phosphorylation of JAK1 and JAK3 and the recruitment and subsequent phosphorylation of signal transducer and activator of transcription-3/STAT3 and STAT5. In mast cells, induces the rapid tyrosine phosphorylation of STAT6 and thereby controls mast cell survival and release of cytokines such as IL4. This Felis catus (Cat) protein is Interleukin-15 (IL15).